Reading from the N-terminus, the 541-residue chain is Cyclin-T1-4 (541 aa).

The tract at residues 277 to 366 (VSEVESSVGG…KSRSGVEAPG (90 aa)) is disordered. The segment covering 307–325 (SDNLGGSTKATQNRSNDNG) has biased composition (polar residues). Residues 336–354 (QKGERDTETKDSMHTESHP) show a composition bias toward basic and acidic residues. A Phosphoserine modification is found at Ser396. Residues 445–541 (EDDKDIQNKS…REPRRHSQER (97 aa)) form a disordered region. Residues 493–511 (MESPCEKQLGEGKRRHDNS) show a composition bias toward basic and acidic residues. Positions 519 to 528 (KTNPGGSSHS) are enriched in polar residues. The span at 529-541 (YGDREPRRHSQER) shows a compositional bias: basic and acidic residues.

Belongs to the cyclin family. Cyclin T subfamily.

The polypeptide is Cyclin-T1-4 (CYCT1-4) (Arabidopsis thaliana (Mouse-ear cress)).